The chain runs to 470 residues: Argininosuccinate lyase (470 aa).

Belongs to the lyase 1 family. Argininosuccinate lyase subfamily.

The protein localises to the cytoplasm. The catalysed reaction is 2-(N(omega)-L-arginino)succinate = fumarate + L-arginine. It functions in the pathway amino-acid biosynthesis; L-arginine biosynthesis; L-arginine from L-ornithine and carbamoyl phosphate: step 3/3. The chain is Argininosuccinate lyase from Leptospira borgpetersenii serovar Hardjo-bovis (strain JB197).